A 350-amino-acid chain; its full sequence is Biotin synthase (350 aa).

The Radical SAM core domain occupies Asn-41–Arg-268. Cys-56, Cys-60, and Cys-63 together coordinate [4Fe-4S] cluster. Residues Cys-100, Cys-131, Cys-191, and Arg-263 each coordinate [2Fe-2S] cluster.

It belongs to the radical SAM superfamily. Biotin synthase family. As to quaternary structure, homodimer. Requires [4Fe-4S] cluster as cofactor. The cofactor is [2Fe-2S] cluster.

The catalysed reaction is (4R,5S)-dethiobiotin + (sulfur carrier)-SH + 2 reduced [2Fe-2S]-[ferredoxin] + 2 S-adenosyl-L-methionine = (sulfur carrier)-H + biotin + 2 5'-deoxyadenosine + 2 L-methionine + 2 oxidized [2Fe-2S]-[ferredoxin]. It functions in the pathway cofactor biosynthesis; biotin biosynthesis; biotin from 7,8-diaminononanoate: step 2/2. Its function is as follows. Catalyzes the conversion of dethiobiotin (DTB) to biotin by the insertion of a sulfur atom into dethiobiotin via a radical-based mechanism. This chain is Biotin synthase, found in Shewanella frigidimarina (strain NCIMB 400).